A 141-amino-acid chain; its full sequence is HTH-type transcriptional repressor NsrR (141 aa).

An HTH rrf2-type domain is found at Q2–D129. The segment at residues I28 to Q51 is a DNA-binding region (H-T-H motif). [2Fe-2S] cluster is bound by residues C91, C96, and C102.

[2Fe-2S] cluster serves as cofactor.

Its function is as follows. Nitric oxide-sensitive repressor of genes involved in protecting the cell against nitrosative stress. May require iron for activity. The sequence is that of HTH-type transcriptional repressor NsrR from Vibrio vulnificus (strain CMCP6).